The primary structure comprises 227 residues: Ornithine decarboxylase antizyme 1 (227 aa).

It belongs to the ODC antizyme family. As to quaternary structure, interacts with ODC1 and thereby sterically blocks ODC homodimerization. Forms a ternary complex with PSMB4 and OAZ1 before PSMB4 is incorporated into the 20S proteasome. Interacts with AZIN2; this interaction disrupts the interaction between the antizyme and ODC1. Interacts with FAM171A1.

Functionally, ornithine decarboxylase (ODC) antizyme protein that negatively regulates ODC activity and intracellular polyamine biosynthesis and uptake in response to increased intracellular polyamine levels. Binds to ODC monomers, inhibiting the assembly of the functional ODC homodimer, and targets the monomers for ubiquitin-independent proteolytic destruction by the 26S proteasome. Triggers ODC degradation by inducing the exposure of a cryptic proteasome-interacting surface of ODC. Stabilizes AZIN2 by interfering with its ubiquitination. Also inhibits cellular uptake of polyamines by inactivating the polyamine uptake transporter. SMAD1/OAZ1/PSMB4 complex mediates the degradation of the CREBBP/EP300 repressor SNIP1. Involved in the translocation of AZIN2 from ER-Golgi intermediate compartment (ERGIC) to the cytosol. The chain is Ornithine decarboxylase antizyme 1 (Oaz1) from Mus musculus (Mouse).